Here is a 503-residue protein sequence, read N- to C-terminus: L-amino-acid oxidase (503 aa).

Residues Met-1–Cys-18 form the signal peptide. Cys-28 and Cys-191 are oxidised to a cystine. Residues Met-61–Ser-62, Glu-81–Ala-82, Arg-89, and Gly-105–Arg-108 each bind FAD. Arg-108 provides a ligand contact to substrate. Asn-190 is a glycosylation site (N-linked (GlcNAc...) asparagine). His-241 lines the substrate pocket. Residue Val-279 coordinates FAD. The cysteines at positions 349 and 430 are disulfide-linked. Tyr-390 is a binding site for substrate. FAD contacts are provided by residues Glu-475 and Gly-482–Thr-487. A substrate-binding site is contributed by Gly-482 to Trp-483.

Belongs to the flavin monoamine oxidase family. FIG1 subfamily. In terms of assembly, homodimer; non-covalently linked. Requires FAD as cofactor. Post-translationally, N-glycosylated. The enzymatic activity is not affected by deglycosylation. As to expression, expressed by the venom gland.

It localises to the secreted. It carries out the reaction an L-alpha-amino acid + O2 + H2O = a 2-oxocarboxylate + H2O2 + NH4(+). It catalyses the reaction L-leucine + O2 + H2O = 4-methyl-2-oxopentanoate + H2O2 + NH4(+). The enzyme catalyses L-phenylalanine + O2 + H2O = 3-phenylpyruvate + H2O2 + NH4(+). The catalysed reaction is L-methionine + O2 + H2O = 4-methylsulfanyl-2-oxobutanoate + H2O2 + NH4(+). It carries out the reaction L-isoleucine + O2 + H2O = (S)-3-methyl-2-oxopentanoate + H2O2 + NH4(+). In terms of biological role, catalyzes an oxidative deamination of predominantly hydrophobic and aromatic L-amino acids, thus producing hydrogen peroxide that may contribute to the diverse toxic effects of this enzyme. Is highly active on L-Met, L-Leu, L-Phe and L-Ile. Exhibits diverse biological activities, such as antibacterial on both Gram-positive and Gram-negative bacteria and antiparasitic activities, as well as induction of platelet aggregation. Effects of snake L-amino oxidases on platelets are controversial, since they either induce aggregation or inhibit agonist-induced aggregation. These different effects are probably due to different experimental conditions. This protein may also have activities in hemorrhage, hemolysis, edema, and apoptosis. This is L-amino-acid oxidase from Bothrops pauloensis (Neuwied's lancehead).